The sequence spans 180 residues: ATP synthase subunit delta (180 aa).

It belongs to the ATPase delta chain family. In terms of assembly, F-type ATPases have 2 components, F(1) - the catalytic core - and F(0) - the membrane proton channel. F(1) has five subunits: alpha(3), beta(3), gamma(1), delta(1), epsilon(1). F(0) has three main subunits: a(1), b(2) and c(10-14). The alpha and beta chains form an alternating ring which encloses part of the gamma chain. F(1) is attached to F(0) by a central stalk formed by the gamma and epsilon chains, while a peripheral stalk is formed by the delta and b chains.

The protein resides in the cell inner membrane. Its function is as follows. F(1)F(0) ATP synthase produces ATP from ADP in the presence of a proton or sodium gradient. F-type ATPases consist of two structural domains, F(1) containing the extramembraneous catalytic core and F(0) containing the membrane proton channel, linked together by a central stalk and a peripheral stalk. During catalysis, ATP synthesis in the catalytic domain of F(1) is coupled via a rotary mechanism of the central stalk subunits to proton translocation. This protein is part of the stalk that links CF(0) to CF(1). It either transmits conformational changes from CF(0) to CF(1) or is implicated in proton conduction. The sequence is that of ATP synthase subunit delta from Anaplasma phagocytophilum (strain HZ).